The primary structure comprises 298 residues: Acetylglutamate kinase (298 aa).

Residues 69–70, arginine 91, and asparagine 191 each bind substrate; that span reads GG.

It belongs to the acetylglutamate kinase family. ArgB subfamily.

The protein resides in the cytoplasm. It carries out the reaction N-acetyl-L-glutamate + ATP = N-acetyl-L-glutamyl 5-phosphate + ADP. The protein operates within amino-acid biosynthesis; L-arginine biosynthesis; N(2)-acetyl-L-ornithine from L-glutamate: step 2/4. Functionally, catalyzes the ATP-dependent phosphorylation of N-acetyl-L-glutamate. The protein is Acetylglutamate kinase of Neisseria meningitidis serogroup A / serotype 4A (strain DSM 15465 / Z2491).